We begin with the raw amino-acid sequence, 652 residues long: DNA ligase (652 aa).

NAD(+) is bound by residues Asp29–Asp33, Ser78–Leu79, and Glu107. Lys109 functions as the N6-AMP-lysine intermediate in the catalytic mechanism. The NAD(+) site is built by Arg130, Glu164, Lys278, and Lys302. 4 residues coordinate Zn(2+): Cys395, Cys398, Cys413, and Cys418. One can recognise a BRCT domain in the interval Val577–Leu652.

This sequence belongs to the NAD-dependent DNA ligase family. LigA subfamily. Requires Mg(2+) as cofactor. Mn(2+) is required as a cofactor.

The enzyme catalyses NAD(+) + (deoxyribonucleotide)n-3'-hydroxyl + 5'-phospho-(deoxyribonucleotide)m = (deoxyribonucleotide)n+m + AMP + beta-nicotinamide D-nucleotide.. Functionally, DNA ligase that catalyzes the formation of phosphodiester linkages between 5'-phosphoryl and 3'-hydroxyl groups in double-stranded DNA using NAD as a coenzyme and as the energy source for the reaction. It is essential for DNA replication and repair of damaged DNA. This is DNA ligase from Streptococcus pneumoniae (strain Taiwan19F-14).